Reading from the N-terminus, the 174-residue chain is Ribosome maturation factor RimM (174 aa).

Positions 97–169 constitute a PRC barrel domain; the sequence is PDTYYDHQLE…ILEIDPPDGL (73 aa).

It belongs to the RimM family. In terms of assembly, binds ribosomal protein uS19.

It localises to the cytoplasm. In terms of biological role, an accessory protein needed during the final step in the assembly of 30S ribosomal subunit, possibly for assembly of the head region. Essential for efficient processing of 16S rRNA. May be needed both before and after RbfA during the maturation of 16S rRNA. It has affinity for free ribosomal 30S subunits but not for 70S ribosomes. This is Ribosome maturation factor RimM from Mycobacterium ulcerans (strain Agy99).